The primary structure comprises 135 residues: Large ribosomal subunit protein eL32 (135 aa).

This sequence belongs to the eukaryotic ribosomal protein eL32 family.

The polypeptide is Large ribosomal subunit protein eL32 (Methanococcus maripaludis (strain C5 / ATCC BAA-1333)).